Consider the following 585-residue polypeptide: Mitochondrial translation ATP-dependent RNA helicase mrh5 (585 aa).

Positions 87 to 117 (PKFHELPLNQNILDGLSTNFAEYKNSTPLQQ) match the Q motif motif. Residues 121–351 (NALMKSGVSF…SRYITDQLGI (231 aa)) enclose the Helicase ATP-binding domain. 134–141 (GWNGSGKS) is an ATP binding site. The DEAD box signature appears at 261 to 264 (DESD). In terms of domain architecture, Helicase C-terminal spans 390–584 (NLPYEFVRFN…PKSYEFDDEH (195 aa)).

This sequence belongs to the DEAD box helicase family. Component of the MRH5C complex, composed of mrh5, ppr4, mtf2, and sls1. Proteins mtf2 and sls1 form a subcomplex that serves as a scaffold to bring mrh5 and ppr4 together. The MRH5C complex associates with the small subunit of the mitochondrial ribosome.

It is found in the mitochondrion. It catalyses the reaction ATP + H2O = ADP + phosphate + H(+). Its function is as follows. Translation activation factor that as part of the MRH5C complex specifically recruits cox1 mRNA to the mitochondrial ribosome for translation initiation. The protein is Mitochondrial translation ATP-dependent RNA helicase mrh5 of Schizosaccharomyces pombe (strain 972 / ATCC 24843) (Fission yeast).